A 624-amino-acid chain; its full sequence is Low affinity potassium transport system protein Kup (624 aa).

Helical transmembrane passes span 9–29 (LPAI…TSPL), 49–69 (VFGF…IKYL), 103–123 (VIMG…TPAI), 137–157 (PQLD…LFMI), 165–185 (VGKL…GLGL), 213–233 (VSFI…ALYA), 247–267 (WFTV…ALLL), 276–296 (PFFL…AALA), 337–357 (IYIP…IVIV), 365–385 (LAAA…ILST), 398–418 (FVAL…TANL), and 421–441 (LLSG…VMTT).

This sequence belongs to the HAK/KUP transporter (TC 2.A.72) family.

It localises to the cell inner membrane. The enzyme catalyses K(+)(in) + H(+)(in) = K(+)(out) + H(+)(out). Responsible for the low-affinity transport of potassium into the cell. Likely operates as a K(+):H(+) symporter. This chain is Low affinity potassium transport system protein Kup, found in Shigella dysenteriae serotype 1 (strain Sd197).